Consider the following 79-residue polypeptide: Dicentracin (79 aa).

A signal peptide spans 1–22 (MKCATLFLVLSMVVLMAEPGDA). Glycine amide is present on Gly44. Positions 47 to 79 (AQQDQQDQQYQQDQQDQQAEQYQRFNRERAAFD) are excised as a propeptide. Positions 48 to 67 (QQDQQDQQYQQDQQDQQAEQ) are disordered.

This sequence belongs to the pleurocidin family.

It is found in the secreted. This chain is Dicentracin, found in Dicentrarchus labrax (European seabass).